Here is a 1249-residue protein sequence, read N- to C-terminus: MSPAAAAAGAGERRRPIASVRDGRGRGCGGPARAVLLGLSLVGLLLYLVPAAAALAWLTVGATAAWWGLSREPRGSRPLSSFVRKARHRRPLSSFVRKARHRRTLFASPLAKSTANGNLLEPRTLLEGPDPAELLLMGSYLGKPGPPQPAAAPEGQDLRDRPGRRPPARPAPRSPPPRSPPPRSPPPSPPTHRAHHVYPSLPTPLLRPSRRPSPRDCGTLPNRFVITPRRRYPIHQAQYSCLGVLPTVCWNGYHKKAVLSPRNSRMVCSPVTVRIAPPDRRFSRSAIPEQIISSTLSSPSSNAPDPCAKETVLSALKEKEKKRTVEEEDQIFLDGQENKRRRHDSSGSGHSAFEPLVANGVPASFVPKPGSLKRGLNSQSSDDHLNKRSRSSSMSSLTGAYASGIPSSSRNAITSSYSSTRGISQLWKRNGPSSSPFSSPASSRSQTPERPAKKIREEELCHHSSSSTPLAADRESQGEKAADTTPRKKQNSNSQSTPGSSGQRKRKVQLLPSRRGEQLTLPPPPQLGYSITAEDLDLEKKASLQWFNQALEDKSDAASNSVTETPPITQPSFTFTLPAAAPASPPTSLLAPSTNPLLESLKKMQTPPSLPPCPESAGAATTEALSPPKTPSLLPPLGLSQSGPPGLLPSPSFDSKPPTTLLGLIPAPSMVPATDTKAPPTLQAETATKPQATSAPSPAPKQSFLFGTQNTSPSSPAAPAASSAPPMFKPIFTAPPKSEKEGPTPPGPSVTATAPSSSSLPTTTSTTAPTFQPVFSSMGPPASVPLPAPFFKQTTTPATAPTTTAPLFTGLASATSAVAPITSASPSTDSASKPAFGFGINSVSSSSVSTTTSTATAASQPFLFGAPQASAASFTPAMGSIFQFGKPPALPTTTTVTTFSQSLHTAVPTATSSSAADFSGFGSTLATSAPATSSQPTLTFSNTSTPTFNIPFGSSAKSPLPSYPGANPQPAFGAAEGQPPGAAKPALAPSFGSSFTFGNSAAPAAAPTPAPPSMIKVVPAYVPTPIHPIFGGATHSAFGLKATASAFGAPASSQPAFGGSTAVFFGAATSSGFGATTQTASSGSSSSVFGSTTPSPFTFGGSAAPAGSGSFGINVATPGSSTTTGAFSFGAGQSGSTATSTPFAGGLGQNALGTTGQSTPFAFNVSSTTESKPVFGGTATPTFGLNTPAPGVGTSGSSLSFGASSAPAQGFVGVAPFGSAALSFSIGAGSKTPGARQRLQARRQHTRKK.

Low complexity predominate over residues methionine 1–alanine 10. Residues methionine 1–glycine 27 form a disordered region. Residues methionine 1 to alanine 34 form a cisternal side region. The required for targeting to the nucleus and nuclear pore complex stretch occupies residues methionine 1–serine 285. The segment covering glycine 11–glycine 25 has biased composition (basic and acidic residues). A helical transmembrane segment spans residues valine 35–leucine 55. The pore side stretch occupies residues alanine 56–lysine 1249. Residue serine 94 is modified to Phosphoserine. Disordered stretches follow at residues leucine 136–leucine 220, lysine 319–serine 530, lysine 602–serine 776, proline 959–alanine 986, and isoleucine 1226–lysine 1249. Residues alanine 168–proline 190 show a composition bias toward pro residues. Phosphoserine occurs at positions 345, 351, 371, 393, and 396. Over residues isoleucine 405–isoleucine 423 the composition is skewed to polar residues. A compositionally biased stretch (low complexity) spans proline 432–serine 445. Basic and acidic residues-rich tracts occupy residues arginine 450–histidine 462 and alanine 472–proline 486. Polar residues predominate over residues asparagine 491–glycine 502. A compositionally biased stretch (low complexity) spans proline 635 to serine 652. Residues glutamine 683–proline 696 show a composition bias toward polar residues. Low complexity-rich tracts occupy residues serine 712–proline 726 and serine 749–threonine 770. The span at leucine 1239–lysine 1249 shows a compositional bias: basic residues.

Belongs to the POM121 family.

It is found in the nucleus. The protein localises to the nuclear pore complex. The protein resides in the nucleus membrane. It localises to the endoplasmic reticulum membrane. Its function is as follows. Essential component of the nuclear pore complex (NPC). The repeat-containing domain may be involved in anchoring components of the pore complex to the pore membrane. When overexpressed in cells induces the formation of cytoplasmic annulate lamellae (AL). The protein is Nuclear envelope pore membrane protein POM 121 (POM121) of Homo sapiens (Human).